We begin with the raw amino-acid sequence, 218 residues long: Ribosomal RNA large subunit methyltransferase E (218 aa).

S-adenosyl-L-methionine is bound by residues Gly64, Trp66, Asp92, Asp108, and Asp133. The active-site Proton acceptor is Lys173.

The protein belongs to the class I-like SAM-binding methyltransferase superfamily. RNA methyltransferase RlmE family.

It is found in the cytoplasm. The enzyme catalyses uridine(2552) in 23S rRNA + S-adenosyl-L-methionine = 2'-O-methyluridine(2552) in 23S rRNA + S-adenosyl-L-homocysteine + H(+). Its function is as follows. Specifically methylates the uridine in position 2552 of 23S rRNA at the 2'-O position of the ribose in the fully assembled 50S ribosomal subunit. The protein is Ribosomal RNA large subunit methyltransferase E of Paracidovorax citrulli (strain AAC00-1) (Acidovorax citrulli).